A 47-amino-acid polypeptide reads, in one-letter code: Sperm protamine P1 (47 aa).

Belongs to the protamine P1 family. In terms of tissue distribution, testis.

The protein resides in the nucleus. Its subcellular location is the chromosome. In terms of biological role, protamines substitute for histones in the chromatin of sperm during the haploid phase of spermatogenesis. They compact sperm DNA into a highly condensed, stable and inactive complex. This is Sperm protamine P1 (PRM1) from Myotis daubentonii (Daubenton's bat).